The primary structure comprises 121 residues: UPF0344 protein BC_1150 (121 aa).

Helical transmembrane passes span 6 to 26 (ITAWALGLILFFVAYSLYSAG), 38 to 58 (LMYIIIIVTGFMLYMSIVKTA), 65 to 85 (WYGLKMLAGILVIGGMEMVLV), and 92 to 112 (PTGAVWGLFIVALVAVFYLGL).

It belongs to the UPF0344 family.

The protein resides in the cell membrane. This chain is UPF0344 protein BC_1150, found in Bacillus cereus (strain ATCC 14579 / DSM 31 / CCUG 7414 / JCM 2152 / NBRC 15305 / NCIMB 9373 / NCTC 2599 / NRRL B-3711).